A 320-amino-acid chain; its full sequence is ADP/ATP translocase 4 (320 aa).

Residues 1 to 20 (MSNESSKKQSSKKALFDPVS) are Mitochondrial intermembrane-facing. A Solcar 1 repeat occupies 19–111 (VSFSKDLLAG…FAFKDKYKEL (93 aa)). Residues 21–50 (FSKDLLAGGVAAAVSKTAVAPIERVKLLLQ) form a helical membrane-spanning segment. Residues 51 to 87 (VQASSKQISPEARYKGMLDCLVRIPREQGFLSYWRGN) are Mitochondrial matrix-facing. Residues 88-112 (LANVIRYFPTQALNFAFKDKYKELF) traverse the membrane as a helical segment. ADP-binding residues include Arg-93 and Lys-105. Residues 113–122 (MSGVNKEKQF) are Mitochondrial intermembrane-facing. Residues 123-143 (WRWFLANLASGGAAGATSLCV) traverse the membrane as a helical segment. 2 Solcar repeats span residues 124–214 (RWFL…VKGL) and 221–308 (TPFL…IKEF). Residues 144–191 (VYPLDFARTRLGVDIGKGPEQRQFTGLGDCIMKIAKSDGLIGLYQGFG) are Mitochondrial matrix-facing. A helical membrane pass occupies residues 192–212 (VSVQGIIVYRASYFGAYDTVK). Over 213–223 (GLLPKPKETPF) the chain is Mitochondrial intermembrane. Residues 224-244 (LVSFIIAQIVTTCSGILSYPF) traverse the membrane as a helical segment. Topologically, residues 245 to 284 (DTVRRRMMMQSGESDRQYKGTIDCFLKIYRHEGVPAFFRG) are mitochondrial matrix. Arg-248 is a binding site for ADP. The tract at residues 248-253 (RRRMMM) is important for transport activity. The Nucleotide carrier signature motif motif lies at 248-253 (RRRMMM). Residues 285 to 302 (AFSNILRGTGGALVLVLY) traverse the membrane as a helical segment. Residues 303–320 (DKIKEFLNIDVGGSSSGD) lie on the Mitochondrial intermembrane side of the membrane.

This sequence belongs to the mitochondrial carrier (TC 2.A.29) family. Monomer. As to expression, specifically expressed in undifferentiated embryonic stem cells and germ cells. Expression is down-regulated after embryonic stem cells differentiation. In adults, only expressed in developing gametes in testis. In testis, expressed at higher level in spermatocytes. Expression is probably associated with entry of the male germ cells into meiosis. Expressed at very low level in Sertoli cells.

The protein resides in the mitochondrion inner membrane. Its subcellular location is the membrane. The protein localises to the cell projection. It is found in the cilium. It localises to the flagellum membrane. The enzyme catalyses ADP(in) + ATP(out) = ADP(out) + ATP(in). The catalysed reaction is dATP(out) + ADP(in) = dATP(in) + ADP(out). It carries out the reaction dADP(in) + ADP(out) = dADP(out) + ADP(in). It catalyses the reaction H(+)(in) = H(+)(out). Its activity is regulated as follows. The matrix-open state (m-state) is inhibited by the membrane-permeable bongkrekic acid (BKA). The cytoplasmic-open state (c-state) is inhibited by the membrane-impermeable toxic inhibitor carboxyatractyloside (CATR). Proton transporter activity is inhibited by ADP:ATP antiporter activity. In terms of biological role, ADP:ATP antiporter that mediates import of ADP into the mitochondrial matrix for ATP synthesis, and export of ATP out to fuel the cell. Cycles between the cytoplasmic-open state (c-state) and the matrix-open state (m-state): operates by the alternating access mechanism with a single substrate-binding site intermittently exposed to either the cytosolic (c-state) or matrix (m-state) side of the inner mitochondrial membrane. Specifically required during spermatogenesis, probably to mediate ADP:ATP exchange in spermatocytes. Large ATP supplies from mitochondria may be critical for normal progression of spermatogenesis during early stages of meiotic prophase I, including DNA double-strand break repair and chromosomal synapsis. In addition to its ADP:ATP antiporter activity, also involved in mitochondrial uncoupling and mitochondrial permeability transition pore (mPTP) activity. Plays a role in mitochondrial uncoupling by acting as a proton transporter: proton transport uncouples the proton flows via the electron transport chain and ATP synthase to reduce the efficiency of ATP production and cause mitochondrial thermogenesis. Proton transporter activity is inhibited by ADP:ATP antiporter activity, suggesting that SLC25A31/ANT4 acts as a master regulator of mitochondrial energy output by maintaining a delicate balance between ATP production (ADP:ATP antiporter activity) and thermogenesis (proton transporter activity). Proton transporter activity requires free fatty acids as cofactor, but does not transport it. Among nucleotides, may also exchange ADP for dATP and dADP. Also plays a key role in mPTP opening, a non-specific pore that enables free passage of the mitochondrial membranes to solutes of up to 1.5 kDa, and which contributes to cell death. It is however unclear if SLC25A31/ANT4 constitutes a pore-forming component of mPTP or regulates it. This is ADP/ATP translocase 4 from Mus musculus (Mouse).